A 333-amino-acid chain; its full sequence is MQAAGHPEPLDSRGSFSLPTMGANVSQDNGTGHNATFSEPLPFLYVLLPAVYSGICAVGLTGNTAVILVILRAPKMKTVTNVFILNLAVADGLFTLVLPVNIAEHLLQYWPFGELLCKLVLAVDHYNIFSSIYFLAVMSVDRYLVVLATVRSRHMPWRTYRGAKVASLCVWLGVTVLVLPFFSFAGVYSNELQVPSCGLSFPWPEQVWFKASRVYTLVLGFVLPVCTICVLYTDLLRRLRAVRLRSGAKALGKARRKVTVLVLVVLAVCLLCWTPFHLASVVALTTDLPQTPLVISMSYVITSLSYANSCLNPFLYAFLDDNFRKNFRSILRC.

At Met-1–Tyr-45 the chain is on the extracellular side. 3 N-linked (GlcNAc...) asparagine glycosylation sites follow: Asn-24, Asn-29, and Asn-34. Residues Val-46–Val-69 traverse the membrane as a helical segment. Residues Ile-70 to Thr-80 are Cytoplasmic-facing. Residues Asn-81–His-105 traverse the membrane as a helical segment. Over Leu-106–Val-120 the chain is Extracellular. An intrachain disulfide couples Cys-117 to Cys-197. The helical transmembrane segment at Leu-121 to Val-140 threads the bilayer. Over Asp-141 to Val-165 the chain is Cytoplasmic. The chain crosses the membrane as a helical span at residues Ala-166–Ala-185. Residues Gly-186–Ala-211 are Extracellular-facing. A helical transmembrane segment spans residues Ser-212–Thr-233. Residues Asp-234–Lys-257 lie on the Cytoplasmic side of the membrane. The chain crosses the membrane as a helical span at residues Val-258–Val-282. At Ala-283–Pro-292 the chain is on the extracellular side. A helical membrane pass occupies residues Leu-293–Ala-307. The Cytoplasmic segment spans residues Asn-308–Cys-333.

The protein belongs to the G-protein coupled receptor 1 family. As to expression, detected at high levels in caudate nucleus, hippocampus and amygdala; at moderate levels in the adult brain, thalamus, parietal cortex, pituitary gland, adrenal gland and lymph nodes.

The protein localises to the cell membrane. Interacts specifically with a number of opioid ligands. Receptor for neuropeptides B and W, which may be involved in neuroendocrine system regulation, food intake and the organization of other signals. The polypeptide is Neuropeptides B/W receptor type 2 (NPBWR2) (Homo sapiens (Human)).